The following is a 365-amino-acid chain: Putative agmatine deiminase (365 aa).

The active-site Amidino-cysteine intermediate is Cys-357.

The protein belongs to the agmatine deiminase family.

The enzyme catalyses agmatine + H2O = N-carbamoylputrescine + NH4(+). This Yersinia pseudotuberculosis serotype O:1b (strain IP 31758) protein is Putative agmatine deiminase.